The sequence spans 416 residues: Tumor necrosis factor receptor superfamily member 16 (416 aa).

An N-terminal signal peptide occupies residues 1-19 (MAGFVPLLLLLLPAGPTWG). TNFR-Cys repeat units lie at residues 23-57 (KCLTKMYTTSGECCKACNLGEGVVQPCGVNQTVCE), 58-99 (PCLD…DAVC), 100-138 (RCAYGYFQDELSGSCKECSICEVGFGLMFPCRDSQDTVC), and 140-180 (ECPE…DAEC). 12 disulfide bridges follow: Cys-24–Cys-35, Cys-36–Cys-49, Cys-39–Cys-56, Cys-59–Cys-75, Cys-78–Cys-91, Cys-81–Cys-99, Cys-101–Cys-114, Cys-117–Cys-130, Cys-120–Cys-138, Cys-141–Cys-156, Cys-159–Cys-172, and Cys-162–Cys-180. At 29–239 (YTTSGECCKA…PVVSRGTADN (211 aa)) the chain is on the extracellular side. An N-linked (GlcNAc...) asparagine glycan is attached at Asn-52. A helical membrane pass occupies residues 240-261 (LIPVYCSILAAVVVGLVAYIAF). Over 262–416 (KRWNSCKQNK…YSESTATSPV (155 aa)) the chain is Cytoplasmic. Composition is skewed to polar residues over residues 270–284 (NKQGANNRPVNQTPS) and 294–315 (SGISVDSQSLHDQQPPNQSTQG). The disordered stretch occupies residues 270-328 (NKQGANNRPVNQTPSPEGEKLHSDSGISVDSQSLHDQQPPNQSTQGPAPKGDGSLYASL). Residues 333–410 (QEEVEKLLSS…DIAESLYSES (78 aa)) form the Death domain.

Homodimer; disulfide-linked. Heterodimer with SORCS2. The extracellular domains of the heterodimer bind NGF. N- and O-glycosylated. Post-translationally, phosphorylated on serine residues. Detected in embryonic dorsal root ganglion and retina.

It is found in the cell membrane. It localises to the perikaryon. The protein resides in the cell projection. Its subcellular location is the growth cone. The protein localises to the dendritic spine. Functionally, low affinity receptor which can bind to NGF, BDNF, NTF3, and NTF4. Forms a heterodimeric receptor with SORCS2 that binds the precursor forms of NGF, BDNF and NTF3 with high affinity, and has much lower affinity for mature NGF and BDNF. Plays an important role in differentiation and survival of specific neuronal populations during development. Can mediate cell survival as well as cell death of neural cells. Plays a role in the inactivation of RHOA. Necessary for the circadian oscillation of clock genes in the suprachiasmatic nucleus (SCmgetaN) of the brain and in liver and of the genes involved in glucose and lipid metabolism in the liver. This is Tumor necrosis factor receptor superfamily member 16 (NGFR) from Gallus gallus (Chicken).